A 211-amino-acid chain; its full sequence is Endoplasmic reticulum vesicle protein 25 (211 aa).

The signal sequence occupies residues 1–19 (MKSIVSVLTLLLLINAVAA). The Lumenal segment spans residues 20 to 180 (LRFVLPAKDK…TNESTNRRVK (161 aa)). The GOLD domain maps to 33–121 (PFCVRDFVKN…TKEIDLSVAI (89 aa)). A helical membrane pass occupies residues 181–201 (FFSVGITLALIALGVWQIIYL). The Cytoplasmic portion of the chain corresponds to 202–211 (RSYFRSKHII).

Belongs to the EMP24/GP25L family.

The protein resides in the endoplasmic reticulum membrane. It localises to the golgi apparatus membrane. Constituent of COPII-coated endoplasmic reticulum-derived transport vesicles. Required for efficient transport of a subset of secretory proteins to the Golgi. Facilitates retrograde transport from the Golgi to the endoplasmic reticulum. This is Endoplasmic reticulum vesicle protein 25 (ERV25) from Yarrowia lipolytica (strain CLIB 122 / E 150) (Yeast).